Consider the following 503-residue polypeptide: Cytochrome P450 3A13 (503 aa).

Cysteine 442 serves as a coordination point for heme.

The protein belongs to the cytochrome P450 family. The cofactor is heme.

The protein localises to the endoplasmic reticulum membrane. It is found in the microsome membrane. The enzyme catalyses an organic molecule + reduced [NADPH--hemoprotein reductase] + O2 = an alcohol + oxidized [NADPH--hemoprotein reductase] + H2O + H(+). Its function is as follows. Can activate aflatoxin B1 to a genotoxic product. The chain is Cytochrome P450 3A13 (Cyp3a13) from Mus musculus (Mouse).